Reading from the N-terminus, the 458-residue chain is Bifunctional thioredoxin reductase/thioredoxin (458 aa).

The segment at 1-321 (MNTTPSAHET…LAEHAGSKAN (321 aa)) is thioredoxin reductase. FAD is bound by residues 19–22 (SGPA), 41–48 (EGTSFGGA), N57, and V90. A disulfide bond links C142 and C145. NADP(+) is bound by residues S163, H182, R188, I245, and Y265. Residues D285 and 292-295 (RQAI) contribute to the FAD site. An NADP(+)-binding site is contributed by R292. The tract at residues 322-347 (ETTEETGDVDSTDTTDWSTAMTDAKN) is linker. Positions 341-455 (AMTDAKNAGV…LLRDLSDVVP (115 aa)) constitute a Thioredoxin domain. A disulfide bond links C379 and C382.

It in the N-terminal section; belongs to the class-II pyridine nucleotide-disulfide oxidoreductase family. Homodimer. FAD is required as a cofactor.

It localises to the cytoplasm. It catalyses the reaction [thioredoxin]-dithiol + NADP(+) = [thioredoxin]-disulfide + NADPH + H(+). The chain is Bifunctional thioredoxin reductase/thioredoxin (trxB/A) from Mycobacterium leprae (strain TN).